We begin with the raw amino-acid sequence, 409 residues long: Forkhead box protein A2 (409 aa).

The fork-head DNA-binding region spans Ala-150–Leu-241. Positions Asp-250–Ser-262 are enriched in basic and acidic residues. A disordered region spans residues Asp-250–His-315. A compositionally biased stretch (low complexity) spans Glu-263–Asn-286.

It localises to the nucleus. May play a crucial role in specification of both the axial mesendoderm and the ventral nervous system. This Danio rerio (Zebrafish) protein is Forkhead box protein A2 (foxa2).